A 176-amino-acid polypeptide reads, in one-letter code: Crossover junction endodeoxyribonuclease RuvC (176 aa).

Active-site residues include Asp-9, Glu-69, and Asp-141. Positions 9, 69, and 141 each coordinate Mg(2+).

Belongs to the RuvC family. In terms of assembly, homodimer which binds Holliday junction (HJ) DNA. The HJ becomes 2-fold symmetrical on binding to RuvC with unstacked arms; it has a different conformation from HJ DNA in complex with RuvA. In the full resolvosome a probable DNA-RuvA(4)-RuvB(12)-RuvC(2) complex forms which resolves the HJ. Requires Mg(2+) as cofactor.

The protein resides in the cytoplasm. The enzyme catalyses Endonucleolytic cleavage at a junction such as a reciprocal single-stranded crossover between two homologous DNA duplexes (Holliday junction).. In terms of biological role, the RuvA-RuvB-RuvC complex processes Holliday junction (HJ) DNA during genetic recombination and DNA repair. Endonuclease that resolves HJ intermediates. Cleaves cruciform DNA by making single-stranded nicks across the HJ at symmetrical positions within the homologous arms, yielding a 5'-phosphate and a 3'-hydroxyl group; requires a central core of homology in the junction. The consensus cleavage sequence is 5'-(A/T)TT(C/G)-3'. Cleavage occurs on the 3'-side of the TT dinucleotide at the point of strand exchange. HJ branch migration catalyzed by RuvA-RuvB allows RuvC to scan DNA until it finds its consensus sequence, where it cleaves and resolves the cruciform DNA. The polypeptide is Crossover junction endodeoxyribonuclease RuvC (Chromobacterium violaceum (strain ATCC 12472 / DSM 30191 / JCM 1249 / CCUG 213 / NBRC 12614 / NCIMB 9131 / NCTC 9757 / MK)).